Consider the following 482-residue polypeptide: MFS-type transporter cnsL (482 aa).

A helical transmembrane segment spans residues 73 to 93 (LFVCATLSGLDKTAISAAAVY). N-linked (GlcNAc...) asparagine glycosylation occurs at Asn100. 9 helical membrane-spanning segments follow: residues 108 to 128 (WIGS…AYCL), 131 to 151 (VPAV…EMSV), 170 to 190 (IILN…VGYY), 199 to 219 (IIFL…YFVL), 304 to 324 (LLAM…SYLA), 333 to 353 (AIVT…YALP), 361 to 381 (LVGL…VSVY), 392 to 412 (ITLY…GPQT), and 426 to 446 (VAMI…GVVC).

The protein belongs to the major facilitator superfamily. Allantoate permease family.

It localises to the cell membrane. MFS-type transporter; part of the gene cluster that mediates the biosynthesis of communesins, a prominent class of indole alkaloids with great potential as pharmaceuticals. With the MFS transporter cnsO, is most likely responsible for cummunesins secretion and thereby may contribute to intrinsic resistance. This is MFS-type transporter cnsL from Penicillium expansum (Blue mold rot fungus).